Here is a 95-residue protein sequence, read N- to C-terminus: UPF0213 protein ESA_03545 (95 aa).

The 76-residue stretch at 2–77 (EEWFLYLIRC…KQLTKRQKEQ (76 aa)) folds into the GIY-YIG domain.

The protein belongs to the UPF0213 family.

The chain is UPF0213 protein ESA_03545 from Cronobacter sakazakii (strain ATCC BAA-894) (Enterobacter sakazakii).